A 204-amino-acid chain; its full sequence is Tumor necrosis factor alpha-induced protein 8-like protein 3 (204 aa).

Residues methionine 1–glutamate 10 show a composition bias toward acidic residues. The segment at methionine 1 to histidine 20 is disordered. A binding to phosphoinositides region spans residues valine 21–leucine 204.

This sequence belongs to the TNFAIP8 family. In terms of tissue distribution, widely expressed (at protein level).

The protein localises to the cytoplasm. Its subcellular location is the cell membrane. Acts as a lipid transfer protein. Preferentially captures and shuttles two lipid second messengers, i.e., phosphatidylinositol 4,5- bisphosphate and phosphatidylinositol 3,4,5-trisphosphate and increases their levels in the plasma membrane. Additionally, may also function as a lipid-presenting protein to enhance the activity of the PI3K-AKT and MEK-ERK pathways. May act as a regulator of tumorigenesis through its activation of phospholipid signaling. This chain is Tumor necrosis factor alpha-induced protein 8-like protein 3 (Tnfaip8l3), found in Mus musculus (Mouse).